A 349-amino-acid polypeptide reads, in one-letter code: Phosphoribosylformylglycinamidine cyclo-ligase (349 aa).

The protein belongs to the AIR synthase family.

The protein localises to the cytoplasm. The enzyme catalyses 2-formamido-N(1)-(5-O-phospho-beta-D-ribosyl)acetamidine + ATP = 5-amino-1-(5-phospho-beta-D-ribosyl)imidazole + ADP + phosphate + H(+). It functions in the pathway purine metabolism; IMP biosynthesis via de novo pathway; 5-amino-1-(5-phospho-D-ribosyl)imidazole from N(2)-formyl-N(1)-(5-phospho-D-ribosyl)glycinamide: step 2/2. The protein is Phosphoribosylformylglycinamidine cyclo-ligase of Methanococcus maripaludis (strain DSM 14266 / JCM 13030 / NBRC 101832 / S2 / LL).